The following is a 200-amino-acid chain: HTH-type transcriptional repressor KstR2 (200 aa).

The HTH tetR-type domain maps to 9 to 69 (NSRRGELLEL…ELLRGFLDWL (61 aa)). The segment at residues 32-51 (TVRDIADGAGILSGSLYHHF) is a DNA-binding region (H-T-H motif).

Homodimer.

Controls the expression of a small regulon that may play a role in the utilization of cholesterol. In Mycobacterium tuberculosis (strain CDC 1551 / Oshkosh), this protein is HTH-type transcriptional repressor KstR2 (kstR2).